We begin with the raw amino-acid sequence, 152 residues long: Methylglyoxal synthase (152 aa).

The MGS-like domain maps to 5–152 (TRTVQAQKHI…YQLYLQQRLK (148 aa)). Residues histidine 19, lysine 23, 45–48 (TGTT), and 65–66 (SG) each bind substrate. Aspartate 71 serves as the catalytic Proton donor/acceptor. Histidine 98 lines the substrate pocket.

This sequence belongs to the methylglyoxal synthase family.

It catalyses the reaction dihydroxyacetone phosphate = methylglyoxal + phosphate. In terms of biological role, catalyzes the formation of methylglyoxal from dihydroxyacetone phosphate. This chain is Methylglyoxal synthase, found in Erwinia tasmaniensis (strain DSM 17950 / CFBP 7177 / CIP 109463 / NCPPB 4357 / Et1/99).